The chain runs to 147 residues: Large ribosomal subunit protein uL11 (147 aa).

Belongs to the universal ribosomal protein uL11 family. Part of the ribosomal stalk of the 50S ribosomal subunit. Interacts with L10 and the large rRNA to form the base of the stalk. L10 forms an elongated spine to which L12 dimers bind in a sequential fashion forming a multimeric L10(L12)X complex. One or more lysine residues are methylated.

Its function is as follows. Forms part of the ribosomal stalk which helps the ribosome interact with GTP-bound translation factors. This is Large ribosomal subunit protein uL11 from Cytophaga hutchinsonii (strain ATCC 33406 / DSM 1761 / CIP 103989 / NBRC 15051 / NCIMB 9469 / D465).